We begin with the raw amino-acid sequence, 122 residues long: Holo-[acyl-carrier-protein] synthase (122 aa).

Mg(2+)-binding residues include Asp-8 and Glu-52.

Belongs to the P-Pant transferase superfamily. AcpS family. Requires Mg(2+) as cofactor.

The protein localises to the cytoplasm. It catalyses the reaction apo-[ACP] + CoA = holo-[ACP] + adenosine 3',5'-bisphosphate + H(+). Functionally, transfers the 4'-phosphopantetheine moiety from coenzyme A to a Ser of acyl-carrier-protein. The polypeptide is Holo-[acyl-carrier-protein] synthase (Lachnoclostridium phytofermentans (strain ATCC 700394 / DSM 18823 / ISDg) (Clostridium phytofermentans)).